The chain runs to 265 residues: Ribosomal RNA small subunit methyltransferase A (265 aa).

S-adenosyl-L-methionine contacts are provided by His13, Leu15, Gly40, Glu62, Asp87, and Asn106.

It belongs to the class I-like SAM-binding methyltransferase superfamily. rRNA adenine N(6)-methyltransferase family. RsmA subfamily.

It is found in the cytoplasm. The catalysed reaction is adenosine(1518)/adenosine(1519) in 16S rRNA + 4 S-adenosyl-L-methionine = N(6)-dimethyladenosine(1518)/N(6)-dimethyladenosine(1519) in 16S rRNA + 4 S-adenosyl-L-homocysteine + 4 H(+). Specifically dimethylates two adjacent adenosines (A1518 and A1519) in the loop of a conserved hairpin near the 3'-end of 16S rRNA in the 30S particle. May play a critical role in biogenesis of 30S subunits. This chain is Ribosomal RNA small subunit methyltransferase A, found in Persephonella marina (strain DSM 14350 / EX-H1).